A 162-amino-acid chain; its full sequence is MLPPTIRISGLAKTLHIPSRSPLQALKGSFILLNKRKFHYSPFILQEKVQSSNHTIRSDTKLWKRLLKITGKQAHQFKDKPFSHIFAFLFLHELSAILPLPIFFFIFHSLDWTPTGLPGEYLQKGSHVAASIFAKLGYNLPLEKVSKTLLDGAAAYAVVKVC.

Residues 1-45 constitute a mitochondrion transit peptide; that stretch reads MLPPTIRISGLAKTLHIPSRSPLQALKGSFILLNKRKFHYSPFIL. Over 46–84 the chain is Mitochondrial matrix; that stretch reads QEKVQSSNHTIRSDTKLWKRLLKITGKQAHQFKDKPFSH. Residues 85–105 traverse the membrane as a helical segment; that stretch reads IFAFLFLHELSAILPLPIFFF. At 106-124 the chain is on the mitochondrial intermembrane side; that stretch reads IFHSLDWTPTGLPGEYLQK. The chain crosses the membrane as a helical span at residues 125 to 142; the sequence is GSHVAASIFAKLGYNLPL. Residues 143–162 are Mitochondrial matrix-facing; the sequence is EKVSKTLLDGAAAYAVVKVC.

It belongs to the MRX11 family. As to quaternary structure, associates with the mitochondrial ribosome.

It localises to the mitochondrion. The protein localises to the mitochondrion inner membrane. In terms of biological role, component of MIOREX complexes, large expressome-like assemblies of ribosomes with factors involved in all the steps of post-transcriptional gene expression. The chain is MIOREX complex component 11 (mrx11) from Schizosaccharomyces pombe (strain 972 / ATCC 24843) (Fission yeast).